The following is a 417-amino-acid chain: Histidine--tRNA ligase (417 aa).

The protein belongs to the class-II aminoacyl-tRNA synthetase family. As to quaternary structure, homodimer.

The protein localises to the cytoplasm. The enzyme catalyses tRNA(His) + L-histidine + ATP = L-histidyl-tRNA(His) + AMP + diphosphate + H(+). The polypeptide is Histidine--tRNA ligase (Nitratidesulfovibrio vulgaris (strain ATCC 29579 / DSM 644 / CCUG 34227 / NCIMB 8303 / VKM B-1760 / Hildenborough) (Desulfovibrio vulgaris)).